The following is a 218-amino-acid chain: NADH dehydrogenase [ubiquinone] iron-sulfur protein 7, mitochondrial (218 aa).

The span at 34 to 48 (LPALSPSTSPTSYTR) shows a compositional bias: low complexity. The interval 34-61 (LPALSPSTSPTSYTRPGPPSTSPPPPGL) is disordered. Positions 49–60 (PGPPSTSPPPPG) are enriched in pro residues. [4Fe-4S] cluster is bound by residues Cys-93, Cys-94, Cys-158, and Cys-188.

It belongs to the complex I 20 kDa subunit family. As to quaternary structure, complex I is composed of at least 49 different subunits. This is a component of the iron-sulfur (IP) fragment of the enzyme. Requires [4Fe-4S] cluster as cofactor.

Its subcellular location is the mitochondrion. The catalysed reaction is a ubiquinone + NADH + 5 H(+)(in) = a ubiquinol + NAD(+) + 4 H(+)(out). In terms of biological role, core subunit of the mitochondrial membrane respiratory chain NADH dehydrogenase (Complex I) that is believed to belong to the minimal assembly required for catalysis. Complex I functions in the transfer of electrons from NADH to the respiratory chain. The immediate electron acceptor for the enzyme is believed to be ubiquinone. The protein is NADH dehydrogenase [ubiquinone] iron-sulfur protein 7, mitochondrial of Arabidopsis thaliana (Mouse-ear cress).